A 221-amino-acid chain; its full sequence is Large ribosomal subunit protein uL3 (221 aa).

Belongs to the universal ribosomal protein uL3 family. As to quaternary structure, part of the 50S ribosomal subunit. Forms a cluster with proteins L14 and L19.

Its function is as follows. One of the primary rRNA binding proteins, it binds directly near the 3'-end of the 23S rRNA, where it nucleates assembly of the 50S subunit. This chain is Large ribosomal subunit protein uL3, found in Chlamydia muridarum (strain MoPn / Nigg).